We begin with the raw amino-acid sequence, 419 residues long: LWamide neuropeptides (419 aa).

The signal sequence occupies residues 1–27 (MEKEMRNLMLLVLLTVILDNGIGKCNA). The segment at 27–48 (AKSEEDQDGNARNNRIDKNDDN) is disordered. Residues 28–104 (KSEEDQDGNA…ENLDIDSTVQ (77 aa)) constitute a propeptide that is removed on maturation. Residue W110 is modified to Tryptophan amide. Residues 113–140 (EADFDNTRAHDSAQISDEKQSGLWVGDA) constitute a propeptide that is removed on maturation. The span at 120–132 (RAHDSAQISDEKQ) shows a compositional bias: basic and acidic residues. Positions 120 to 332 (RAHDSAQISD…PGLWGRQVED (213 aa)) are disordered. The residue at position 146 (W146) is a Tryptophan amide. A propeptide spanning residues 149–150 (DA) is cleaved from the precursor. W156 carries the post-translational modification Tryptophan amide. A propeptide spanning residues 159–160 (DA) is cleaved from the precursor. Residue W166 is modified to Tryptophan amide. The propeptide occupies 169–170 (DA). Tryptophan amide is present on W176. Positions 179–180 (DA) are excised as a propeptide. W186 carries the post-translational modification Tryptophan amide. A propeptide spanning residues 189-190 (DA) is cleaved from the precursor. W196 is modified (tryptophan amide). Positions 199-200 (DA) are excised as a propeptide. At W206 the chain carries Tryptophan amide. The propeptide occupies 209–210 (DA). Position 216 is a tryptophan amide (W216). A propeptide spans 218 to 220 (GDA) (seems to have a sequencing error or a mutation in position 218; Gly instead of Arg). Position 226 is a tryptophan amide (W226). Residues 229 to 230 (DA) constitute a propeptide that is removed on maturation. W236 is modified (tryptophan amide). Positions 239-240 (DA) are excised as a propeptide. Position 246 is a tryptophan amide (W246). Residues 249–250 (DA) constitute a propeptide that is removed on maturation. W256 carries the tryptophan amide modification. Positions 259-260 (DA) are excised as a propeptide. W266 carries the tryptophan amide modification. Residues 269 to 270 (DA) constitute a propeptide that is removed on maturation. W276 bears the Tryptophan amide mark. A propeptide spanning residues 279–280 (DT) is cleaved from the precursor. W286 bears the Tryptophan amide mark. A propeptide spanning residues 289 to 290 (DA) is cleaved from the precursor. The residue at position 296 (W296) is a Tryptophan amide. 2 consecutive propeptides follow at residues 299–300 (DA) and 309–320 (DNNVIKSRSDDA). W326 is modified (tryptophan amide). Residues 329–419 (QVEDGPTKIW…RRNNKKNNKF (91 aa)) constitute a propeptide that is removed on maturation.

The protein belongs to the LWamide neuropeptide family. In terms of tissue distribution, in planula larvae, expressed in a narrow ring of ectodermal neurosensory cells around the widest circumference at the anterior of the larvae. In primary polyps, expression is confined to endodermal cells of the hypostome. In mature polyps, expression is strong in the epidermis from the tentacle level to the base of the polyp and weak in the gastrodermal cells in the apical hypostome.

The protein resides in the secreted. LWamide peptides may be involved in induction of metamorphosis. This Hydractinia echinata (Snail fur) protein is LWamide neuropeptides.